The primary structure comprises 160 residues: Type IV major fimbrial protein FimA (160 aa).

Positions 1 to 7 (MKSLQKG) are cleaved as a propeptide — leader sequence. N-methylphenylalanine is present on Phe-8. Residues 8-28 (FTLIELMIVVAIIGILAAFAI) traverse the membrane as a helical segment. Residues Cys-63 and Cys-105 are joined by a disulfide bond.

It belongs to the N-Me-Phe pilin family. As to quaternary structure, the pili are polar flexible filaments of about 5.4 nanometers diameter and 2.5 micrometers average length; they consist of only a single polypeptide chain arranged in a helical configuration of five subunits per turn in the assembled pilus.

Its subcellular location is the fimbrium. It is found in the membrane. In terms of biological role, major component of the type IV fimbriae that plays an essential role in twitching motility, natural transformation, and protease secretion. The protein is Type IV major fimbrial protein FimA (fimA) of Dichelobacter nodosus (Bacteroides nodosus).